The chain runs to 266 residues: MKEIKVIIAGPRGRMGHEAVLLMERTEHFNLVAAVDYKHGGEKISDLPGMPALDTPIYGDLHTCLEEVEADVLLDLTTPEVGKQHVTLAVERGLRSVIGTTGFTEEELKQLTETAKEKAVGTIIAPNFAIGAVLMMKFSQMAAKYFQDVEVIELHHDQKLDAPSGTAVKTVELIRQNRESKQQGHPNEVEQLEGARGANVDGIHIHSVRLPGLIAHQEVMFGGDGQMLTVRHDSFNRASFMSGVKLSIETVMNLDHLVYGLENIID.

10–15 (GPRGRM) is an NAD(+) binding site. Residue Lys-38 participates in NADP(+) binding. NAD(+)-binding positions include 99–101 (GTT) and 125–128 (APNF). His-155 serves as the catalytic Proton donor/acceptor. His-156 serves as a coordination point for (S)-2,3,4,5-tetrahydrodipicolinate. The active-site Proton donor is Lys-159. 165-166 (GT) lines the (S)-2,3,4,5-tetrahydrodipicolinate pocket.

Belongs to the DapB family.

It is found in the cytoplasm. The enzyme catalyses (S)-2,3,4,5-tetrahydrodipicolinate + NAD(+) + H2O = (2S,4S)-4-hydroxy-2,3,4,5-tetrahydrodipicolinate + NADH + H(+). It carries out the reaction (S)-2,3,4,5-tetrahydrodipicolinate + NADP(+) + H2O = (2S,4S)-4-hydroxy-2,3,4,5-tetrahydrodipicolinate + NADPH + H(+). It functions in the pathway amino-acid biosynthesis; L-lysine biosynthesis via DAP pathway; (S)-tetrahydrodipicolinate from L-aspartate: step 4/4. Its function is as follows. Catalyzes the conversion of 4-hydroxy-tetrahydrodipicolinate (HTPA) to tetrahydrodipicolinate. The sequence is that of 4-hydroxy-tetrahydrodipicolinate reductase from Bacillus cereus (strain Q1).